The primary structure comprises 695 residues: N-terminal acetyltransferase A complex subunit-like protein C418.02 (695 aa).

TPR repeat units follow at residues 8 to 41 (EAFLFDRSIDQFEKGQYSKSLKTIQSVLKKKPKH), 43 to 75 (DSVALLGLNLCKLHDSRSALLKCGYASSIDPKS), 76 to 109 (QFCWHALAIVYRETKDYNNSLKCYQNALAISPNN), 111 to 143 (SLWYDAAYLQAQLGLYQPLFDNWNRLLQLDSSN), 145 to 177 (EYRLCFTLSAFLSGNYKESLEQIQYLISSCNLS), 217 to 250 (FNFEHIKADFAFRQKNYEESIYLYARLLIKFPNR), 262 to 296 (WNFYKSGGLALDLLLKRTDSLIKTFSEILQTGISV), 365 to 398 (LWCTYCLCLAHYKLGDYEESNYWLNLAIDHTPTY), 399 to 432 (PELFLAKAKIFLCMGEIEEALCSFKRSVELDKSD), and 477 to 510 (VWFLVEDGESLLRQKLYGLALKRFHSIYQIYKKW).

Component of the N-terminal acetyltransferase A (NatA) complex.

It localises to the cytoplasm. The protein resides in the nucleus. In terms of biological role, non-catalytic component of the NatA N-terminal acetyltransferase, which catalyzes acetylation of proteins beginning with Met-Ser, Met-Gly and Met-Ala. N-acetylation plays a role in normal eukaryotic translation and processing, protect against proteolytic degradation and protein turnover. The sequence is that of N-terminal acetyltransferase A complex subunit-like protein C418.02 from Schizosaccharomyces pombe (strain 972 / ATCC 24843) (Fission yeast).